Here is a 707-residue protein sequence, read N- to C-terminus: Polyribonucleotide nucleotidyltransferase (707 aa).

Asp-491 and Asp-497 together coordinate Mg(2+). In terms of domain architecture, KH spans 558–617 (PRIEKIKIHPDKIGLLIGPGGKTIKKISAESGAEITIEDDGTVMIYSSSADSLEAAREMI). The region spanning 622–695 (GEVTVGGIYR…EKGRYKFSRK (74 aa)) is the S1 motif domain.

It belongs to the polyribonucleotide nucleotidyltransferase family. Mg(2+) is required as a cofactor.

It localises to the cytoplasm. It carries out the reaction RNA(n+1) + phosphate = RNA(n) + a ribonucleoside 5'-diphosphate. In terms of biological role, involved in mRNA degradation. Catalyzes the phosphorolysis of single-stranded polyribonucleotides processively in the 3'- to 5'-direction. This is Polyribonucleotide nucleotidyltransferase from Methylacidiphilum infernorum (isolate V4) (Methylokorus infernorum (strain V4)).